Here is a 123-residue protein sequence, read N- to C-terminus: Large ribosomal subunit protein bL12 (123 aa).

The protein belongs to the bacterial ribosomal protein bL12 family. As to quaternary structure, homodimer. Part of the ribosomal stalk of the 50S ribosomal subunit. Forms a multimeric L10(L12)X complex, where L10 forms an elongated spine to which 2 to 4 L12 dimers bind in a sequential fashion. Binds GTP-bound translation factors.

Functionally, forms part of the ribosomal stalk which helps the ribosome interact with GTP-bound translation factors. Is thus essential for accurate translation. The sequence is that of Large ribosomal subunit protein bL12 from Shewanella amazonensis (strain ATCC BAA-1098 / SB2B).